Consider the following 203-residue polypeptide: Endo-type membrane-bound lytic murein transglycosylase A (203 aa).

Residues 1–15 (MKLRWFAFLIVLLAG) form the signal peptide. Cys16 carries the N-palmitoyl cysteine lipid modification. Cys16 is lipidated: S-diacylglycerol cysteine.

The protein belongs to the transglycosylase Slt family.

It is found in the cell outer membrane. The enzyme catalyses Endolytic cleavage of the (1-&gt;4)-beta-glycosidic linkage between N-acetylmuramic acid (MurNAc) and N-acetylglucosamine (GlcNAc) residues in peptidoglycan with concomitant formation of a 1,6-anhydrobond in the MurNAc residue.. Functionally, murein-degrading enzyme. May play a role in recycling of muropeptides during cell elongation and/or cell division. Preferentially cleaves at a distance of more than two disaccharide units from the ends of the glycan chain. This Escherichia coli O1:K1 / APEC protein is Endo-type membrane-bound lytic murein transglycosylase A.